The primary structure comprises 236 residues: Small ribosomal subunit protein uS2c (236 aa).

Belongs to the universal ribosomal protein uS2 family.

The protein localises to the plastid. The protein resides in the chloroplast. The polypeptide is Small ribosomal subunit protein uS2c (rps2) (Manihot esculenta (Cassava)).